The following is a 293-amino-acid chain: Glycine--tRNA ligase alpha subunit (293 aa).

Belongs to the class-II aminoacyl-tRNA synthetase family. Tetramer of two alpha and two beta subunits.

It is found in the cytoplasm. It catalyses the reaction tRNA(Gly) + glycine + ATP = glycyl-tRNA(Gly) + AMP + diphosphate. This chain is Glycine--tRNA ligase alpha subunit, found in Picosynechococcus sp. (strain ATCC 27264 / PCC 7002 / PR-6) (Agmenellum quadruplicatum).